The sequence spans 227 residues: Sensory transduction protein RegX3 (227 aa).

The Response regulatory domain maps to 3-116 (SVLIVEDEES…ELIARIRAVL (114 aa)). Asp52 carries the post-translational modification 4-aspartylphosphate. Positions 128–227 (DGVLESGPVR…VRGLGYKLEG (100 aa)) form a DNA-binding region, ompR/PhoB-type.

In terms of processing, phosphorylated by SenX3.

Functionally, member of the two-component regulatory system SenX3/RegX3. Specifically binds to the promoter region of the senX3-regX3 operon. The chain is Sensory transduction protein RegX3 from Mycobacterium bovis (strain ATCC BAA-935 / AF2122/97).